We begin with the raw amino-acid sequence, 455 residues long: MYKHPWLPNLDLTDEMLKEIGVNSLDDLFNDIPAEIKINRLLKVAKDKPLSEYEIEKEIYEKVKKNVELEAPPFIGAGICPHYIPNAVKFIIGRSEFYTSYTPYQPEISQGILQALFEYQSLMAELLEMDVVNASMYDWGSALAEAVLMANRINGKKTVLVPENANPFHKEVMRTWIQGKGIKIEEVKYDKNSGEVDIEDLEKKSSSNDVSAIYVQQPNFFGIFESNIEHIIDVAKHKKALSIIGVNPLSLGLIKPPGSYEADIVVGDGQELGLPLNFGGPLMGIFAVRWDMGLVRQMPGRIVGITRDVNNNMGFTLILQTREQFIKREKATSNITTNEALLALANAVYLSLLGKEGIRELAEEIYFRSHYAAKRLTEIDNVIMPFTSDFFEEFVIKFPIEYNIINDKLKERKLQGGLKLSIHTSLFCVTEVHDKKSIDLLVSTIQEAIKSVETS.

Belongs to the GcvP family. N-terminal subunit subfamily. The glycine cleavage system is composed of four proteins: P, T, L and H. In this organism, the P 'protein' is a heterodimer of two subunits.

It carries out the reaction N(6)-[(R)-lipoyl]-L-lysyl-[glycine-cleavage complex H protein] + glycine + H(+) = N(6)-[(R)-S(8)-aminomethyldihydrolipoyl]-L-lysyl-[glycine-cleavage complex H protein] + CO2. Functionally, the glycine cleavage system catalyzes the degradation of glycine. The P protein binds the alpha-amino group of glycine through its pyridoxal phosphate cofactor; CO(2) is released and the remaining methylamine moiety is then transferred to the lipoamide cofactor of the H protein. The polypeptide is Probable glycine dehydrogenase (decarboxylating) subunit 1 (Saccharolobus solfataricus (strain ATCC 35092 / DSM 1617 / JCM 11322 / P2) (Sulfolobus solfataricus)).